A 1391-amino-acid polypeptide reads, in one-letter code: MNLLNLFNPLQTAGMEEEFDAIKIGIASPETIRSWSYGEVKKPETINYRTFKPERDGLFCAKIFGPVKDYECLCGKYKRLKFKGVTCEKCGVEVTLSKVRRERMGHIELAAPVAHIWFLKSLPSRLGMVLDMTLRDIERVLYFEAFVVTDPGMTPLQRRQLLTEDDYYNKLDEYGDDFDAKMGAEGIRELLRTLNVAGEIEILRQELESTGSDTKIKKIAKRLKVLEAFHRSGMKLEWMIMDVLPVLPPDLRPLVPLDGGRFATSDLNDLYRRVINRNNRLKRLLELHAPDIIVRNEKRMLQEAVDSLLDNGRRGKAMTGANKRPLKSLADMIKGKGGRFRQNLLGKRVDYSGRSVITVGPYLRLHQCGLPKKMALELFKPFIFHKLEKQGLASTVKAAKKLVEQEVPEVWDILEEVIREHPIMLNRAPTLHRLGIQAFEPILIEGKAIQLHPLVCAAFNADFDGDQMAVHVPLSLEAQMEARTLMLASNNVLSPANGEPIIVPSQDIVLGLYYMTRDRINAKGEGSLFADVKEVHRAYHTKQVELGTKITVRLREWVKNEAGEFEPVVNRYETTVGRALLSEILPKGLPFEYVNKALKKKEISKLINASFRLCGLRDTVIFADHLMYTGFGFAAKGGISIAVDDMEIPKEKAALLAEANAEVKEIEDQYRQGLVTNGERYNKVVDIWGRAGDKIAKAMMDNLSKQKVIDRDGNEVDQESFNSIYMMADSGARGSAAQIKQLSGMRGLMAKPDGSIIETPITSNFREGLTVLQYFIATHGARKGLADTALKTANSGYLTRRLVDVTQDLVVVEDDCGTSDGFVMKAVVQGGDVIEALRDRILGRVTASDVVDPSSGETLVEAGTLLTEKLVDMIDQSGVDEVKVRTPITCKTRHGLCAHCYGRDLARGKLVNAGEAVGVIAAQSIGEPGTQLTMRTFHIGGAASRAAAASQVEAKSNGTARFSSQMRYVANNKGELVVIGRSCEVVIHDDIGRERERHKVPYGAILLVQDGMAIKAGQTLATWDPHTRPMITEHAGMVKFENVEEGVTVAKQTDDVTGLSTLVVIDGKRRSSSASKLLRPTVKLLDENGVEICIPGTSTPVSMAFPVGAVITVREGQEIGKGDVLARIPQASSKTRDITGGLPRVAELFEARVPKDAGMLAEITGTVSFGKETKGKQRLIVTDVDGVAYETLISKEKQILVHDGQVVNRGETIVDGAVDPHDILRLQGIEALARYIVQEVQEVYRLQGVKISDKHIEVIIRQMLRRVNIADAGETGFITGEQVERGDVMAANEKALEEGKEPARYENVLLGITKASLSTDSFISAASFQETTRVLTEAAIMGKQDELRGLKENVIVGRLIPAGTGLTYHRSRHQQWQGVEQETAETQVTDE.

Residues C72, C74, C87, and C90 each coordinate Zn(2+). Positions 462, 464, and 466 each coordinate Mg(2+). The Zn(2+) site is built by C816, C890, C897, and C900.

This sequence belongs to the RNA polymerase beta' chain family. In terms of assembly, the RNAP catalytic core consists of 2 alpha, 1 beta, 1 beta' and 1 omega subunit. When a sigma factor is associated with the core the holoenzyme is formed, which can initiate transcription. Mg(2+) is required as a cofactor. Zn(2+) serves as cofactor.

It catalyses the reaction RNA(n) + a ribonucleoside 5'-triphosphate = RNA(n+1) + diphosphate. Functionally, DNA-dependent RNA polymerase catalyzes the transcription of DNA into RNA using the four ribonucleoside triphosphates as substrates. The chain is DNA-directed RNA polymerase subunit beta' from Neisseria meningitidis serogroup A / serotype 4A (strain DSM 15465 / Z2491).